The following is a 342-amino-acid chain: Phosphoribosylformylglycinamidine cyclo-ligase (342 aa).

Belongs to the AIR synthase family.

The protein resides in the cytoplasm. The catalysed reaction is 2-formamido-N(1)-(5-O-phospho-beta-D-ribosyl)acetamidine + ATP = 5-amino-1-(5-phospho-beta-D-ribosyl)imidazole + ADP + phosphate + H(+). The protein operates within purine metabolism; IMP biosynthesis via de novo pathway; 5-amino-1-(5-phospho-D-ribosyl)imidazole from N(2)-formyl-N(1)-(5-phospho-D-ribosyl)glycinamide: step 2/2. The chain is Phosphoribosylformylglycinamidine cyclo-ligase from Staphylococcus aureus (strain USA300).